Reading from the N-terminus, the 212-residue chain is Fe/S biogenesis protein NfuA (212 aa).

[4Fe-4S] cluster contacts are provided by C169 and C172.

Belongs to the NfuA family. In terms of assembly, homodimer. It depends on [4Fe-4S] cluster as a cofactor.

Functionally, involved in iron-sulfur cluster biogenesis. Binds a 4Fe-4S cluster, can transfer this cluster to apoproteins, and thereby intervenes in the maturation of Fe/S proteins. Could also act as a scaffold/chaperone for damaged Fe/S proteins. In Acinetobacter baylyi (strain ATCC 33305 / BD413 / ADP1), this protein is Fe/S biogenesis protein NfuA.